A 359-amino-acid chain; its full sequence is Putative transposase y4uE (359 aa).

Disordered stretches follow at residues 1–31 and 318–359; these read MGDGPNWRSLPEPSRFVGSDPSPPVPRAPGG and HYAH…EEAA.

It belongs to the transposase 9 family.

The protein is Putative transposase y4uE of Sinorhizobium fredii (strain NBRC 101917 / NGR234).